A 175-amino-acid chain; its full sequence is Cytochrome c homolog (175 aa).

Residues 1–8 (MSGKELNK) lie on the Cytoplasmic side of the membrane. A helical; Signal-anchor membrane pass occupies residues 9-29 (IVAAILFASLIAMMVGFVANI). The Periplasmic segment spans residues 30 to 175 (LYKPTLELQH…LFLKTYVHDK (146 aa)). The heme c site is built by cysteine 84, cysteine 87, histidine 88, and methionine 150.

This sequence belongs to the cytochrome c family. In terms of processing, binds 1 heme c group covalently per subunit.

The protein resides in the cell membrane. May be involved in electron transfer from bc1 complex to aa3. In Rickettsia conorii (strain ATCC VR-613 / Malish 7), this protein is Cytochrome c homolog (cycM).